Reading from the N-terminus, the 269-residue chain is Ribonuclease HII (269 aa).

One can recognise an RNase H type-2 domain in the interval 61 to 250 (RLVCGVDEAG…VRKMLSPGLE (190 aa)). The a divalent metal cation site is built by Asp-67, Glu-68, and Asp-158.

Belongs to the RNase HII family. The cofactor is Mn(2+). It depends on Mg(2+) as a cofactor.

Its subcellular location is the cytoplasm. It carries out the reaction Endonucleolytic cleavage to 5'-phosphomonoester.. Endonuclease that specifically degrades the RNA of RNA-DNA hybrids. The chain is Ribonuclease HII from Parvibaculum lavamentivorans (strain DS-1 / DSM 13023 / NCIMB 13966).